The sequence spans 338 residues: GTPase Obg (338 aa).

In terms of domain architecture, Obg spans 1–159 (MSFIDEVKIH…RWLRLELKLM (159 aa)). The OBG-type G domain occupies 160–331 (ADVGLLGMPS…LLDEIARQLW (172 aa)). GTP is bound by residues 166–173 (GMPSVGKS), 191–195 (FTTLK), 213–216 (DIPG), 283–286 (NKMD), and 312–314 (SAA). Ser173 and Thr193 together coordinate Mg(2+).

Belongs to the TRAFAC class OBG-HflX-like GTPase superfamily. OBG GTPase family. As to quaternary structure, monomer. Mg(2+) is required as a cofactor.

The protein localises to the cytoplasm. Functionally, an essential GTPase which binds GTP, GDP and possibly (p)ppGpp with moderate affinity, with high nucleotide exchange rates and a fairly low GTP hydrolysis rate. Plays a role in control of the cell cycle, stress response, ribosome biogenesis and in those bacteria that undergo differentiation, in morphogenesis control. The sequence is that of GTPase Obg from Geotalea daltonii (strain DSM 22248 / JCM 15807 / FRC-32) (Geobacter daltonii).